The following is a 407-amino-acid chain: Glucan 1,3-beta-glucosidase 1 (407 aa).

The N-terminal stretch at 1-22 is a signal peptide; that stretch reads MLSFTSVFSFFLHALLLKTAFS. Residue Glu213 is the Proton donor of the active site. Residues Cys295 and Cys406 are joined by a disulfide bond. Glu312 functions as the Nucleophile in the catalytic mechanism.

The protein belongs to the glycosyl hydrolase 5 (cellulase A) family.

Its subcellular location is the secreted. The enzyme catalyses Successive hydrolysis of beta-D-glucose units from the non-reducing ends of (1-&gt;3)-beta-D-glucans, releasing alpha-glucose.. Its function is as follows. Beta-glucanases participate in the metabolism of beta-glucan, the main structural component of the cell wall. It could also function biosynthetically as a transglycosylase. The sequence is that of Glucan 1,3-beta-glucosidase 1 (exg1) from Schizosaccharomyces pombe (strain 972 / ATCC 24843) (Fission yeast).